The primary structure comprises 471 residues: Eremophilane O-acetyltransferase prx11 (471 aa).

It belongs to the fumigaclavine B O-acetyltransferase family. As to quaternary structure, monomer.

It functions in the pathway sesquiterpene biosynthesis. In terms of biological role, O-acetyltransferase; part of the gene cluster that mediates the biosynthesis of PR-toxin, a bicyclic sesquiterpene belonging to the eremophilane class and acting as a mycotoxin. The first step of the pathway is catalyzed by the aristolochene synthase which performs the cyclization of trans,trans-farnesyl diphosphate (FPP) to the bicyclic sesquiterpene aristolochene. Following the formation of aristolochene, the non-oxygenated aristolochene is converted to the trioxygenated intermediate eremofortin B, via 7-epi-neopetasone. This conversion appears to involve three enzymes, a hydroxysterol oxidase-like enzyme, the quinone-oxidase prx3 that forms the quinone-type-structure in the bicyclic nucleus of aristolochene with the C8-oxo group and the C-3 hydroxyl group, and the P450 monooxygenase prx9 that introduces the epoxide at the double bond between carbons 1 and 2. No monoxy or dioxy-intermediates have been reported to be released to the broth, so these three early oxidative reactions may be coupled together. Eremofortin B is further oxidized by another P450 monooxygenase, that introduces a second epoxide between carbons 7 and 11 prior to acetylation to eremofortin A by the acetyltransferase prx11. The second epoxidation may be performed by a second P450 monooxygenase. After the acetylation step, eremofortin A is converted to eremofortin C and then to PR-toxin. First the conversion of eremofortin A to eremofortin C proceeds by oxidation of the side chain of the molecule at C-12 and is catalyzed by the short-chain oxidoreductase prx1. The cytochrome P450 monooxygenase prx8 also plays a role in this step. The primary alcohol formed at C-12 is finally oxidized by the short-chain alcohol dehydrogenase prx4 that forms PR-toxin. The chain is Eremophilane O-acetyltransferase prx11 from Penicillium rubens (strain ATCC 28089 / DSM 1075 / NRRL 1951 / Wisconsin 54-1255) (Penicillium chrysogenum).